Consider the following 168-residue polypeptide: Nicotinamide-nucleotide adenylyltransferase (168 aa).

ATP contacts are provided by arginine 8, phenylalanine 9, histidine 13, histidine 16, phenylalanine 119, arginine 121, tyrosine 124, glycine 126, threonine 127, and arginine 130.

It belongs to the archaeal NMN adenylyltransferase family. Homohexamer existing as a trimer of dimers.

It is found in the cytoplasm. It carries out the reaction beta-nicotinamide D-ribonucleotide + ATP + H(+) = diphosphate + NAD(+). The protein operates within cofactor biosynthesis; NAD(+) biosynthesis; NAD(+) from nicotinamide D-ribonucleotide: step 1/1. Catalyzes the formation of NAD(+) from nicotinamide mononucleotide (NMN) and ATP. In Methanocaldococcus jannaschii (strain ATCC 43067 / DSM 2661 / JAL-1 / JCM 10045 / NBRC 100440) (Methanococcus jannaschii), this protein is Nicotinamide-nucleotide adenylyltransferase.